Here is a 129-residue protein sequence, read N- to C-terminus: Replication initiation control protein YabA (129 aa).

Residues histidine 103, cysteine 105, cysteine 119, and cysteine 122 each coordinate Zn(2+).

The protein belongs to the YabA family. As to quaternary structure, homotetramer. Interacts with both DnaA and DnaN, acting as a bridge between these two proteins. Zn(2+) is required as a cofactor.

It localises to the cytoplasm. The protein resides in the nucleoid. In terms of biological role, involved in control of chromosome replication initiation. Inhibits the cooperative binding of DnaA to the oriC region, thus negatively regulating initiation of chromosome replication. Inhibits the ability of DnaA-ATP to form a helix on DNA; does not disassemble preformed DnaA-DNA helices. Decreases the residence time of DnaA on the chromosome at its binding sites (oriC, replication forks and promoter-binding sites). Tethers DnaA to the replication machinery via the DNA polymerase beta sliding clamp subunit (dnaN). Associates with oriC and other DnaA targets on the chromosome in a DnaA-dependent manner. The chain is Replication initiation control protein YabA from Listeria innocua serovar 6a (strain ATCC BAA-680 / CLIP 11262).